Reading from the N-terminus, the 291-residue chain is Nitrogenase iron protein 1 (291 aa).

An ATP-binding site is contributed by 10 to 17; the sequence is GKGGIGKS. Cys98 provides a ligand contact to [4Fe-4S] cluster. Arg101 bears the ADP-ribosylarginine; by dinitrogenase reductase ADP-ribosyltransferase mark. Cys133 contacts [4Fe-4S] cluster.

It belongs to the NifH/BchL/ChlL family. As to quaternary structure, homodimer. Requires [4Fe-4S] cluster as cofactor. The reversible ADP-ribosylation of Arg-101 inactivates the nitrogenase reductase and regulates nitrogenase activity.

It carries out the reaction N2 + 8 reduced [2Fe-2S]-[ferredoxin] + 16 ATP + 16 H2O = H2 + 8 oxidized [2Fe-2S]-[ferredoxin] + 2 NH4(+) + 16 ADP + 16 phosphate + 6 H(+). The key enzymatic reactions in nitrogen fixation are catalyzed by the nitrogenase complex, which has 2 components: the iron protein (component 2) and a component 1 which is either a molybdenum-iron protein, a vanadium-iron, or an iron-iron protein. This is Nitrogenase iron protein 1 (nifH1) from Azotobacter chroococcum mcd 1.